The following is a 454-amino-acid chain: MPREIITIQAGQCGNNVGSQFWQQLCLEHGISQDGNLEEFATEGGDRKDVFFYQSDDTRYIPRAILLDLEPRVLNGIQSGPYKNIYNPENFFIGQQGIGAGNNWGAGYAAGEVVQEEVFDMIDREADGSDSLEGFMFLHSIAGGTGSGLGSFLLERMNDRFPKKLIQTYSVFPDTQAADVVVNPYNSLLAMRRLTQNADSVVVLDNAALSRIVADRLHVQEPSFQQTNRLVSTVMSASTTTLRYPGYMHNDLVGIIASLIPTPRSHFLLTSYTPFTGDNIDQAKTVRKTTVLDVMRRLLQPKNRMVSINPSKSSCYISILNIIQGEADPTDVHKSLLRIRERRLASFIPWGPASIQVALTKKSPYIQNTHRVSGLMLANHTSVATLFKRIVQQYDRLRKRNAFLEQYKKEAPFQDGLDEFDEARAVVMDLVGEYEAAERENYLDPDAGKDEVGV.

Residue 142–148 coordinates GTP; it reads AGGTGSG.

This sequence belongs to the tubulin family.

It localises to the cytoplasm. Its subcellular location is the cytoskeleton. It is found in the microtubule organizing center. The protein localises to the spindle pole body. Its function is as follows. Tubulin is the major constituent of microtubules. The gamma chain is found at microtubule organizing centers (MTOC) such as the spindle pole or the centrosome, suggesting that it is involved in the minus-end nucleation of microtubule assembly. Interacts physically with beta-tubulin and is involved in microtubule function. The chain is Tubulin gamma chain (mipA) from Emericella nidulans (strain FGSC A4 / ATCC 38163 / CBS 112.46 / NRRL 194 / M139) (Aspergillus nidulans).